The chain runs to 574 residues: Proline--tRNA ligase (574 aa).

It belongs to the class-II aminoacyl-tRNA synthetase family. ProS type 1 subfamily. Homodimer.

Its subcellular location is the cytoplasm. It carries out the reaction tRNA(Pro) + L-proline + ATP = L-prolyl-tRNA(Pro) + AMP + diphosphate. Its function is as follows. Catalyzes the attachment of proline to tRNA(Pro) in a two-step reaction: proline is first activated by ATP to form Pro-AMP and then transferred to the acceptor end of tRNA(Pro). As ProRS can inadvertently accommodate and process non-cognate amino acids such as alanine and cysteine, to avoid such errors it has two additional distinct editing activities against alanine. One activity is designated as 'pretransfer' editing and involves the tRNA(Pro)-independent hydrolysis of activated Ala-AMP. The other activity is designated 'posttransfer' editing and involves deacylation of mischarged Ala-tRNA(Pro). The misacylated Cys-tRNA(Pro) is not edited by ProRS. This is Proline--tRNA ligase from Nitratidesulfovibrio vulgaris (strain ATCC 29579 / DSM 644 / CCUG 34227 / NCIMB 8303 / VKM B-1760 / Hildenborough) (Desulfovibrio vulgaris).